The chain runs to 231 residues: NADH-ubiquinone oxidoreductase chain 4 (231 aa).

Helical transmembrane passes span 1-21 (PIAGSMILAAILLKLGGYGII), 34-54 (VFLPFIVLALWGAILANLTCL), 63-85 (IAYSSISHMGLVVAAIIIQTPWG), 89-111 (AMALMIAHGFTSSALFCLANTTY), 128-148 (MMPMATTWWLMANLMNIAIPP), 169-189 (TIIMLGLSMLITASYSLHMFL), and 211-231 (LLMTLHLIPLLMISFKPELVT).

The protein belongs to the complex I subunit 4 family.

It is found in the mitochondrion membrane. The catalysed reaction is a ubiquinone + NADH + 5 H(+)(in) = a ubiquinol + NAD(+) + 4 H(+)(out). Core subunit of the mitochondrial membrane respiratory chain NADH dehydrogenase (Complex I) that is believed to belong to the minimal assembly required for catalysis. Complex I functions in the transfer of electrons from NADH to the respiratory chain. The immediate electron acceptor for the enzyme is believed to be ubiquinone. This is NADH-ubiquinone oxidoreductase chain 4 (MT-ND4) from Sistrurus miliarius (Pigmy rattlesnake).